A 35-amino-acid polypeptide reads, in one-letter code: MEALVYTFLLVSTLGIIFFAIFFREPPKVPTKRMK.

The chain crosses the membrane as a helical span at residues 3 to 23; that stretch reads ALVYTFLLVSTLGIIFFAIFF.

Belongs to the PsbT family. In terms of assembly, PSII is composed of 1 copy each of membrane proteins PsbA, PsbB, PsbC, PsbD, PsbE, PsbF, PsbH, PsbI, PsbJ, PsbK, PsbL, PsbM, PsbT, PsbY, PsbZ, Psb30/Ycf12, at least 3 peripheral proteins of the oxygen-evolving complex and a large number of cofactors. It forms dimeric complexes.

Its subcellular location is the plastid. It is found in the chloroplast thylakoid membrane. Its function is as follows. Found at the monomer-monomer interface of the photosystem II (PS II) dimer, plays a role in assembly and dimerization of PSII. PSII is a light-driven water plastoquinone oxidoreductase, using light energy to abstract electrons from H(2)O, generating a proton gradient subsequently used for ATP formation. This chain is Photosystem II reaction center protein T, found in Drimys granadensis.